A 232-amino-acid chain; its full sequence is Phosphoribosylformylglycinamidine synthase subunit PurQ (232 aa).

Positions 2 to 232 (KIAILQFGGT…SMVDYITENF (231 aa)) constitute a Glutamine amidotransferase type-1 domain. C86 (nucleophile) is an active-site residue. Catalysis depends on residues H203 and E205.

In terms of assembly, part of the FGAM synthase complex composed of 1 PurL, 1 PurQ and 2 PurS subunits.

Its subcellular location is the cytoplasm. It carries out the reaction N(2)-formyl-N(1)-(5-phospho-beta-D-ribosyl)glycinamide + L-glutamine + ATP + H2O = 2-formamido-N(1)-(5-O-phospho-beta-D-ribosyl)acetamidine + L-glutamate + ADP + phosphate + H(+). The enzyme catalyses L-glutamine + H2O = L-glutamate + NH4(+). It participates in purine metabolism; IMP biosynthesis via de novo pathway; 5-amino-1-(5-phospho-D-ribosyl)imidazole from N(2)-formyl-N(1)-(5-phospho-D-ribosyl)glycinamide: step 1/2. Functionally, part of the phosphoribosylformylglycinamidine synthase complex involved in the purines biosynthetic pathway. Catalyzes the ATP-dependent conversion of formylglycinamide ribonucleotide (FGAR) and glutamine to yield formylglycinamidine ribonucleotide (FGAM) and glutamate. The FGAM synthase complex is composed of three subunits. PurQ produces an ammonia molecule by converting glutamine to glutamate. PurL transfers the ammonia molecule to FGAR to form FGAM in an ATP-dependent manner. PurS interacts with PurQ and PurL and is thought to assist in the transfer of the ammonia molecule from PurQ to PurL. The sequence is that of Phosphoribosylformylglycinamidine synthase subunit PurQ from Methanosarcina barkeri (strain Fusaro / DSM 804).